The chain runs to 558 residues: DNA ligase B (558 aa).

Lys-126 (N6-AMP-lysine intermediate) is an active-site residue.

The protein belongs to the NAD-dependent DNA ligase family. LigB subfamily.

The catalysed reaction is NAD(+) + (deoxyribonucleotide)n-3'-hydroxyl + 5'-phospho-(deoxyribonucleotide)m = (deoxyribonucleotide)n+m + AMP + beta-nicotinamide D-nucleotide.. Functionally, catalyzes the formation of phosphodiester linkages between 5'-phosphoryl and 3'-hydroxyl groups in double-stranded DNA using NAD as a coenzyme and as the energy source for the reaction. The chain is DNA ligase B from Pseudomonas fluorescens (strain Pf0-1).